A 129-amino-acid chain; its full sequence is GEL complex subunit OPTI (129 aa).

The Cytoplasmic portion of the chain corresponds to 1–44 (MSGGRRKEEPPQPQLANGALKVSVWSKVLRSDAAWDDKDEFLDV). Residues 45 to 65 (IYWFRQIIALVLGVIWGVLPL) form a helical membrane-spanning segment. Residue Arg66 is a topological domain, lumenal. Residues 67 to 84 (GFLGIAGFCLINAGVLYL) traverse the membrane as a helical segment. Over 85–103 (YFSNYLQIDEEEYGGTWEL) the chain is Cytoplasmic. The helical transmembrane segment at 104 to 127 (TKEGFMTSFALFMVIWIIFYTAIH) threads the bilayer. Topologically, residues 128 to 129 (YD) are lumenal.

The protein belongs to the EMC6 family. Component of the GET- and EMC-like (GEL) complex, composed of RAB5IF/OPTI and TMCO1. The GEL complex is part of the multi-pass translocon (MPT) complex, composed of three subcomplexes, the GEL complex (composed of RAB5IF/OPTI and TMCO1), the BOS complex (composed of NCLN/Nicalin, NOMO1 and TMEM147) and the PAT complex (composed of WDR83OS/Asterix and CCDC47). The MPT complex associates with the SEC61 complex. Interacts with NDUFS3, NDUFA4, NDUFV1, NDUFA9 and NDUFS8 of the mitochondrial membrane respiratory chain NADH dehydrogenase (Complex I). Interacts with UQCRC2 of the ubiquinol-cytochrome c reductase complex (Complex III). Interacts with COX5A and COX7C of the cytochrome c oxidase complex (Complex IV). Expressed in neuronal cells.

It localises to the endoplasmic reticulum membrane. Its subcellular location is the mitochondrion inner membrane. In terms of biological role, component of the multi-pass translocon (MPT) complex that mediates insertion of multi-pass membrane proteins into the lipid bilayer of membranes. The MPT complex takes over after the SEC61 complex: following membrane insertion of the first few transmembrane segments of proteins by the SEC61 complex, the MPT complex occludes the lateral gate of the SEC61 complex to promote insertion of subsequent transmembrane regions. Within the MPT complex, the GEL subcomplex may mediate insertion of transmembrane regions into the membrane. In addition to its role in multi-pass membrane insertion, RAB5IF/OPTI also acts as an assembly factor for mitochondrial respiratory complexes. The protein is GEL complex subunit OPTI of Mus musculus (Mouse).